A 69-amino-acid polypeptide reads, in one-letter code: uncharacterized protein (69 aa).

This is an uncharacterized protein from Vaccinia virus (strain Western Reserve) (VACV).